Here is a 271-residue protein sequence, read N- to C-terminus: MKIDIVSVFPEYFEVMNLSLMGKAQAKGLLEIKAHNLRDWTHDVHHSVDDTPVGGGAGMVMKPEVWSECLDELLGFSQPSGSPAPSGAPVLIFPNPSAPLFTQRDATELSHADHLLFGCGRYEGYDARIPDYYRAQGVDVREYSIGDYVLNGGEVAVSVMLEAITRLMPGFMGNPDSIVEESYTGEGALLEHRQYTKPAVWRGIAVPDVLLSGDHGKVDRFRRDEALARTAEIRPDLIAALDCKALDKADRKTLMALGWEVSAAHPRRLAD.

Residues Gly120 and Ile145 to Leu150 each bind S-adenosyl-L-methionine.

Belongs to the RNA methyltransferase TrmD family. As to quaternary structure, homodimer.

It is found in the cytoplasm. The enzyme catalyses guanosine(37) in tRNA + S-adenosyl-L-methionine = N(1)-methylguanosine(37) in tRNA + S-adenosyl-L-homocysteine + H(+). Functionally, specifically methylates guanosine-37 in various tRNAs. This is tRNA (guanine-N(1)-)-methyltransferase from Bifidobacterium longum (strain NCC 2705).